A 370-amino-acid chain; its full sequence is Chaperone protein DnaJ (370 aa).

The J domain maps to 6 to 70 (DYYEVLGVQR…EKRSMYDRFG (65 aa)). The segment at 128-208 (GVEKTIEYRR…CRGEGRIRQT (81 aa)) adopts a CR-type zinc-finger fold. The Zn(2+) site is built by C141, C144, C158, C161, C182, C185, C196, and C199. 4 CXXCXGXG motif repeats span residues 141–148 (CPACRGSG), 158–165 (CPKCGGLG), 182–189 (CDMCRGEG), and 196–203 (CRECRGEG).

Belongs to the DnaJ family. As to quaternary structure, homodimer. It depends on Zn(2+) as a cofactor.

It localises to the cytoplasm. Functionally, participates actively in the response to hyperosmotic and heat shock by preventing the aggregation of stress-denatured proteins and by disaggregating proteins, also in an autonomous, DnaK-independent fashion. Unfolded proteins bind initially to DnaJ; upon interaction with the DnaJ-bound protein, DnaK hydrolyzes its bound ATP, resulting in the formation of a stable complex. GrpE releases ADP from DnaK; ATP binding to DnaK triggers the release of the substrate protein, thus completing the reaction cycle. Several rounds of ATP-dependent interactions between DnaJ, DnaK and GrpE are required for fully efficient folding. Also involved, together with DnaK and GrpE, in the DNA replication of plasmids through activation of initiation proteins. The polypeptide is Chaperone protein DnaJ (Roseiflexus castenholzii (strain DSM 13941 / HLO8)).